The sequence spans 602 residues: MTDIPVARLRNFCIIAHIDHGKSTLADRLLQETGTVSSRDMQEQFLDNMDLERERGITIKLQAARMNYCASDGEQYVLNLIDTPGHVDFSYEVSRSLQACEGALLVVDASQGVEAQTLANVYLALENDLEIIPVLNKVDLPGADSERIKQEIESIIGLDTSTAIECSAKTGIGIPEILQSVVDRIPPPKDLLNDPTKALIFDSYYDSYRGVIVYFRVMTGSISRRDKILLMASRKSYELDEIGIMSPDQRKVEDLHAGEVGYLSASIKAVADARVGDTITLVDDSASEPLPGYTEAKPMVFCGLFPTDADQYPDLREALDKLQLSDAALKYEPETSSAMGFGFRCGFLGLLHMEIVQERLEREYDLDLIVTAPSVIYQVNMIGGETLLIDNPATLPDPQKRESIEEPYVRIEIYAPNEYNGTLMGLCQDRRGDFVDMKFITTDRVTLIYEIPLAEVVTDFFDHMKSRTKGYASMEYHLIGYRENDLVRLDVLINAERADPLTTIVHREKAYGVGRGLVEKLKELIPKQQFKIPLQASIGSRIIASESISALRKDVLAKCYGGDISRKKKLLKKQAKGKKRMKSMGKVDVPQEAFMAVLKLNQ.

The tr-type G domain occupies Ala7–Lys189. GTP-binding positions include Asp19–Thr24 and Asn136–Asp139.

The protein belongs to the TRAFAC class translation factor GTPase superfamily. Classic translation factor GTPase family. LepA subfamily.

It is found in the cell inner membrane. The enzyme catalyses GTP + H2O = GDP + phosphate + H(+). In terms of biological role, required for accurate and efficient protein synthesis under certain stress conditions. May act as a fidelity factor of the translation reaction, by catalyzing a one-codon backward translocation of tRNAs on improperly translocated ribosomes. Back-translocation proceeds from a post-translocation (POST) complex to a pre-translocation (PRE) complex, thus giving elongation factor G a second chance to translocate the tRNAs correctly. Binds to ribosomes in a GTP-dependent manner. This is Elongation factor 4 from Prochlorococcus marinus (strain SARG / CCMP1375 / SS120).